Consider the following 192-residue polypeptide: Shikimate kinase (192 aa).

Position 15-20 (15-20 (GAGKTT)) interacts with ATP. A Mg(2+)-binding site is contributed by threonine 19. Substrate is bound by residues aspartate 37, arginine 61, and glycine 83. Residue arginine 121 participates in ATP binding. Arginine 140 is a binding site for substrate.

It belongs to the shikimate kinase family. Monomer. It depends on Mg(2+) as a cofactor.

It localises to the cytoplasm. It catalyses the reaction shikimate + ATP = 3-phosphoshikimate + ADP + H(+). It participates in metabolic intermediate biosynthesis; chorismate biosynthesis; chorismate from D-erythrose 4-phosphate and phosphoenolpyruvate: step 5/7. Functionally, catalyzes the specific phosphorylation of the 3-hydroxyl group of shikimic acid using ATP as a cosubstrate. The protein is Shikimate kinase of Cupriavidus pinatubonensis (strain JMP 134 / LMG 1197) (Cupriavidus necator (strain JMP 134)).